We begin with the raw amino-acid sequence, 265 residues long: Glutamate racemase (265 aa).

Substrate contacts are provided by residues 12 to 13 (DS) and 44 to 45 (YG). Residue Cys75 is the Proton donor/acceptor of the active site. 76–77 (NT) contacts substrate. Cys186 functions as the Proton donor/acceptor in the catalytic mechanism. 187–188 (TH) is a binding site for substrate.

Belongs to the aspartate/glutamate racemases family.

It catalyses the reaction L-glutamate = D-glutamate. The protein operates within cell wall biogenesis; peptidoglycan biosynthesis. In terms of biological role, provides the (R)-glutamate required for cell wall biosynthesis. The polypeptide is Glutamate racemase (Pseudomonas paraeruginosa (strain DSM 24068 / PA7) (Pseudomonas aeruginosa (strain PA7))).